The chain runs to 506 residues: Zinc finger and SCAN domain containing protein 4D (506 aa).

Residues 37–119 (SAQLNFSPSN…RFMESLTDEC (83 aa)) enclose the SCAN box domain. The segment at 238–264 (SQGNSSHHVDFRSAPTPADVPMEEQPK) is disordered. 4 C2H2-type zinc fingers span residues 395-417 (FKCE…QRTH), 424-446 (LLCV…EIIH), 452-474 (FKCS…EMIH), and 480-503 (YVCS…RNYH).

Highly expressed at the 2-cell stage but its expression is rapidly turned off.

The protein localises to the nucleus. The protein resides in the chromosome. It localises to the telomere. Functionally, transcription factor required to regulate early development. Binds telomeres and plays a key role in genomic stability by regulating telomere elongation. Acts as an activator of spontaneous telomere sister chromatid exchange (T-SCE) and telomere elongation. The chain is Zinc finger and SCAN domain containing protein 4D (Zscan4d) from Mus musculus (Mouse).